A 976-amino-acid polypeptide reads, in one-letter code: Ubiquitin ligase-binding protein BUL1 (976 aa).

The tract at residues 1–65 (MAKDLNDSGF…SPSLHSPKSW (65 aa)) is disordered. Polar residues predominate over residues 23–39 (SDFTANSSTTMNVNANT). Residues 53-64 (SSRSPSLHSPKS) show a composition bias toward low complexity. Phosphoserine occurs at positions 58 and 70. 3 disordered regions span residues 82–124 (LAHS…DGDI), 145–196 (PQGN…SSST), and 857–878 (SEDS…ASLT). Residues 156–160 (FPPSY) carry the PY-motif motif. Low complexity predominate over residues 163–176 (ANNSTATGAAGSSA). Residues 177 to 196 (DLSHQSLSTDALGATRSSST) show a composition bias toward polar residues. Low complexity predominate over residues 862–878 (SHTGNGSSSSPSSASLT).

Belongs to the BUL1 family. As to quaternary structure, component of the RSP5-BUL1/2 ubiquitin ligase complex composed of at least RSP5 and BUL1 or BUL2.

Its subcellular location is the cytoplasm. It functions in the pathway protein modification; protein ubiquitination. In terms of biological role, component of a RSP5 ubiquitin ligase complex which specifies polyubiquitination and intracellular trafficking of the general amino acid permease GAP1 as well as other permeases such as PMA1. The RSP5-BUL1/2 complex is also necessary for the heat-shock element (HSE)-mediated gene expression, nitrogen starvation GLN3-dependent transcription and pressure-induced differential regulation of the 2 tryptophan permeases TAT1 and TAT2. The sequence is that of Ubiquitin ligase-binding protein BUL1 (BUL1) from Saccharomyces cerevisiae (strain ATCC 204508 / S288c) (Baker's yeast).